The chain runs to 499 residues: UDP-N-acetylmuramoylalanine--D-glutamate ligase (499 aa).

120–126 (GTNGKTT) contributes to the ATP binding site.

It belongs to the MurCDEF family.

The protein localises to the cytoplasm. It catalyses the reaction UDP-N-acetyl-alpha-D-muramoyl-L-alanine + D-glutamate + ATP = UDP-N-acetyl-alpha-D-muramoyl-L-alanyl-D-glutamate + ADP + phosphate + H(+). It participates in cell wall biogenesis; peptidoglycan biosynthesis. Functionally, cell wall formation. Catalyzes the addition of glutamate to the nucleotide precursor UDP-N-acetylmuramoyl-L-alanine (UMA). The sequence is that of UDP-N-acetylmuramoylalanine--D-glutamate ligase from Nostoc punctiforme (strain ATCC 29133 / PCC 73102).